Consider the following 807-residue polypeptide: Glycerol-3-phosphate acyltransferase (807 aa).

An HXXXXD motif motif is present at residues 308–313; it reads CHRSHM.

Belongs to the GPAT/DAPAT family.

It is found in the cell inner membrane. The enzyme catalyses sn-glycerol 3-phosphate + an acyl-CoA = a 1-acyl-sn-glycero-3-phosphate + CoA. It participates in phospholipid metabolism; CDP-diacylglycerol biosynthesis; CDP-diacylglycerol from sn-glycerol 3-phosphate: step 1/3. The polypeptide is Glycerol-3-phosphate acyltransferase (Shewanella sp. (strain ANA-3)).